The following is a 421-amino-acid chain: MAVDVTEYHLSVIKSPPGWEVGVYAAGALALLGIAAVSLWKLWTSGSFPSPSPFPNYDYRYLQQKYGEAYVEAKLKRVPPWNAQRTTTRGPPSRKGSLSIEDTFESISELGPLELMGRELDLAPYGTLRKSQSADSLNSISSVSNTFGQDFTLGQVEVSMDYDGASHTLHVAVLQGKDLLEREEATFESCFMRVSLLPDEQIVGISRIQRNAYSIFFDEKFSVPLDPTALEEKSLRFSVFGIDEDERNVSTGVVELKLSVLDLPLQPFSGWLYLQDQNKAADAVGEILLSLSYLPTAERLTVVVVKAKNLIWTNDKTTADPFVKVYLLQDGRKMSKKKTAVKRDDPNPVFNEAMIFSVPAIVLQDLSLRVTVAESSSDGRGDNVGHVIIGPGASGMGTTHWNQMLATLRRPVSMWHPVRRN.

Over 1 to 18 (MAVDVTEYHLSVIKSPPG) the chain is Vesicular. A helical membrane pass occupies residues 19 to 39 (WEVGVYAAGALALLGIAAVSL). The Cytoplasmic portion of the chain corresponds to 40 to 421 (WKLWTSGSFP…VSMWHPVRRN (382 aa)). Residue Ser97 is modified to Phosphoserine; by PKA. A phosphoserine mark is found at Ser99 and Ser214. 2 C2 domains span residues 152–272 (TLGQ…SGWL) and 283–416 (AVGE…SMWH).

The protein belongs to the synaptotagmin family. Homodimer. Can also form heterodimers. Interacts with SYT1. In terms of processing, phosphorylation of Ser-97 is required for mossy-fiber long-term potentiation. As to expression, expressed in the brain, specifically in neurons of the cerebellum, cortex, hippocampus, olfactory bulb, brainstem and spinal cord (at protein level).

The protein localises to the cytoplasmic vesicle. It is found in the secretory vesicle. The protein resides in the synaptic vesicle membrane. Its function is as follows. Synaptic vesicle phosphoprotein that enhances spontaneous neurotransmitter release but does not effect induced neurotransmitter release. Unlike other synaptotagmins, it does not bind Ca(2+) or phospholipids. Essential for mossy-fiber long-term potentiation in the hippocampus. This is Synaptotagmin-12 from Rattus norvegicus (Rat).